The chain runs to 151 residues: Homeobox protein HD-1 (151 aa).

Residues 87-146 (ESIKSRRFPKFITEALERSFEIDQYPSEAEKARLAKICKLSTKQINNWFTNKRNRTKGHE) constitute a DNA-binding region (homeobox).

It localises to the nucleus. In Encephalitozoon cuniculi (strain GB-M1) (Microsporidian parasite), this protein is Homeobox protein HD-1 (HD-1).